The primary structure comprises 1451 residues: ARF guanine-nucleotide exchange factor GNOM (1451 aa).

A DCB domain region spans residues 1 to 246 (MGRLKLHSGI…VNRAGSIKQE (246 aa)). Residues 557–752 (RRKYIKRRLM…NEIRTTPEQG (196 aa)) enclose the SEC7 domain. E658 is an active-site residue. Residues 1430-1451 (SQLGDDETVSNGLSSPENTTGS) form a disordered region.

Homodimer. Interacts with CYP19-4/CYP5 in vitro. Stems, leaves, flowers, siliques, floral inflorescence and roots. Expressed in the whole plant (at the protein level).

The protein resides in the cytoplasm. It localises to the cytosol. The protein localises to the endosome membrane. Its subcellular location is the cell membrane. Inhibited by brefeldin A (BFA). Functionally, activates the ARF proteins by exchanging bound GDP for free GTP. Plays a role in vesicular protein sorting. Acts as the major regulator of endosomal vesicle trafficking but is also involved in the endocytosis process. Could function redundantly with GNL1 in the retrograde Golgi to endoplasmic reticulum trafficking. Regulates vesicle trafficking required for the coordinated polar localization of auxin efflux carriers which in turn determines the direction of auxin flow. Mediates the sorting of PIN1 from endosomal compartments to the basal plasma membrane and the polarization of PIN3 to the bottom side of hypocotyl endodermal cells. Involved in the specification of apical-basal pattern formation in the early embryo and during root formation. Required for correct cell wall organization leading to normal cell adhesion during seedling development. Also plays an essential role in hydrotropism of seedling roots. The polypeptide is ARF guanine-nucleotide exchange factor GNOM (GN) (Arabidopsis thaliana (Mouse-ear cress)).